Here is a 267-residue protein sequence, read N- to C-terminus: Thymidylate synthase (267 aa).

R25 serves as a coordination point for dUMP. H55 contacts (6R)-5,10-methylene-5,6,7,8-tetrahydrofolate. A dUMP-binding site is contributed by 130 to 131 (RR). C150 (nucleophile) is an active-site residue. DUMP is bound by residues 170 to 173 (RSAD), N181, and 211 to 213 (HIY). Position 173 (D173) interacts with (6R)-5,10-methylene-5,6,7,8-tetrahydrofolate. A266 contacts (6R)-5,10-methylene-5,6,7,8-tetrahydrofolate.

The protein belongs to the thymidylate synthase family. Bacterial-type ThyA subfamily. Homodimer.

Its subcellular location is the cytoplasm. The catalysed reaction is dUMP + (6R)-5,10-methylene-5,6,7,8-tetrahydrofolate = 7,8-dihydrofolate + dTMP. It functions in the pathway pyrimidine metabolism; dTTP biosynthesis. In terms of biological role, catalyzes the reductive methylation of 2'-deoxyuridine-5'-monophosphate (dUMP) to 2'-deoxythymidine-5'-monophosphate (dTMP) while utilizing 5,10-methylenetetrahydrofolate (mTHF) as the methyl donor and reductant in the reaction, yielding dihydrofolate (DHF) as a by-product. This enzymatic reaction provides an intracellular de novo source of dTMP, an essential precursor for DNA biosynthesis. The polypeptide is Thymidylate synthase (Corynebacterium efficiens (strain DSM 44549 / YS-314 / AJ 12310 / JCM 11189 / NBRC 100395)).